The sequence spans 36 residues: uncharacterized protein (36 aa).

The chain crosses the membrane as a helical span at residues 13–35 (SVILSPFPCCVLKSYLTVIYISF).

It is found in the host membrane. This is an uncharacterized protein from Pseudoalteromonas espejiana (Bacteriophage PM2).